We begin with the raw amino-acid sequence, 260 residues long: Chlorocatechol 1,2-dioxygenase (260 aa).

Residues Tyr-130, Tyr-164, His-188, and His-190 each contribute to the Fe cation site.

It belongs to the intradiol ring-cleavage dioxygenase family. Fe(3+) is required as a cofactor.

It catalyses the reaction 3-chlorocatechol + O2 = (2E,4Z)-2-chloromuconate + 2 H(+). It carries out the reaction 3,5-dichlorocatechol + O2 = (2E,4E)-2,4-dichloromuconate + 2 H(+). It participates in aromatic compound metabolism; 3-chlorocatechol degradation. Functionally, preferentially converts 3-chlorocatechol and 3,5-dichlorocatechol as opposed to other chlorinated catechols. Retains diminished activity toward non-chlorinated substrates. In Pseudomonas putida (Arthrobacter siderocapsulatus), this protein is Chlorocatechol 1,2-dioxygenase (clcA).